The sequence spans 523 residues: 2-isopropylmalate synthase (523 aa).

Residues 5–267 form the Pyruvate carboxyltransferase domain; sequence VIIFDTTLRD…HTAINHQEIW (263 aa). Residues Asp14, His202, His204, and Asn238 each coordinate Mn(2+). The interval 392 to 523 is regulatory domain; it reads RLDYFSVQSG…QHNENNKETV (132 aa).

Belongs to the alpha-IPM synthase/homocitrate synthase family. LeuA type 1 subfamily. In terms of assembly, homodimer. Mn(2+) is required as a cofactor.

Its subcellular location is the cytoplasm. The enzyme catalyses 3-methyl-2-oxobutanoate + acetyl-CoA + H2O = (2S)-2-isopropylmalate + CoA + H(+). Its pathway is amino-acid biosynthesis; L-leucine biosynthesis; L-leucine from 3-methyl-2-oxobutanoate: step 1/4. Its function is as follows. Catalyzes the condensation of the acetyl group of acetyl-CoA with 3-methyl-2-oxobutanoate (2-ketoisovalerate) to form 3-carboxy-3-hydroxy-4-methylpentanoate (2-isopropylmalate). This is 2-isopropylmalate synthase from Escherichia coli O127:H6 (strain E2348/69 / EPEC).